Consider the following 86-residue polypeptide: Small ribosomal subunit protein uS17 (86 aa).

It belongs to the universal ribosomal protein uS17 family. As to quaternary structure, part of the 30S ribosomal subunit.

Its function is as follows. One of the primary rRNA binding proteins, it binds specifically to the 5'-end of 16S ribosomal RNA. This is Small ribosomal subunit protein uS17 from Halorhodospira halophila (strain DSM 244 / SL1) (Ectothiorhodospira halophila (strain DSM 244 / SL1)).